Reading from the N-terminus, the 461-residue chain is Argininosuccinate lyase (461 aa).

Belongs to the lyase 1 family. Argininosuccinate lyase subfamily.

Its subcellular location is the cytoplasm. The catalysed reaction is 2-(N(omega)-L-arginino)succinate = fumarate + L-arginine. It functions in the pathway amino-acid biosynthesis; L-arginine biosynthesis; L-arginine from L-ornithine and carbamoyl phosphate: step 3/3. This is Argininosuccinate lyase from Symbiobacterium thermophilum (strain DSM 24528 / JCM 14929 / IAM 14863 / T).